We begin with the raw amino-acid sequence, 117 residues long: Large ribosomal subunit protein bL20 (117 aa).

The protein belongs to the bacterial ribosomal protein bL20 family.

Functionally, binds directly to 23S ribosomal RNA and is necessary for the in vitro assembly process of the 50S ribosomal subunit. It is not involved in the protein synthesizing functions of that subunit. The chain is Large ribosomal subunit protein bL20 from Crocosphaera subtropica (strain ATCC 51142 / BH68) (Cyanothece sp. (strain ATCC 51142)).